We begin with the raw amino-acid sequence, 79 residues long: MKLTCMKIVAVLFLTAWTFVTADDSRNGLEYLFPKAHYEMNPEASKLNKKQDCAAGGQFCGFPKIGGPCCSGWCLGVCA.

Positions 1-22 are cleaved as a signal peptide; sequence MKLTCMKIVAVLFLTAWTFVTA. A propeptide spanning residues 23 to 48 is cleaved from the precursor; sequence DDSRNGLEYLFPKAHYEMNPEASKLN. At Gln51 the chain carries Pyrrolidone carboxylic acid. 3 cysteine pairs are disulfide-bonded: Cys53-Cys70, Cys60-Cys74, and Cys69-Cys78.

This sequence belongs to the conotoxin O1 superfamily. In terms of tissue distribution, expressed by the venom duct.

Its subcellular location is the secreted. In Conus ventricosus (Mediterranean cone), this protein is Conotoxin VnMKLT1-01122.